A 1369-amino-acid chain; its full sequence is Microtubule-associated tumor suppressor candidate 2 (1369 aa).

Disordered regions lie at residues 180-262 (ASSS…TQTV), 374-442 (GRGN…FIPN), 477-509 (GENK…VAEN), 582-627 (NTSP…EERT), 791-839 (RSSA…LRPP), 861-992 (SSVS…QARE), and 1331-1369 (WKLQ…TTPR). 2 stretches are compositionally biased toward polar residues: residues 246 to 262 (PSTS…TQTV) and 392 to 401 (LHTTPKQGSA). The tract at residues 641–980 (RPKIITYIRR…PKQRTAAARN (340 aa)) is mediates interaction with MAPRE1. Residues 801–890 (GPITTATSLY…TRSTFGNEEQ (90 aa)) form a sufficient for interaction with KIF2C region. Residues 801–1150 (GPITTATSLY…HDAALLEMEN (350 aa)) are localization to the growing distal tip of microtubules. A compositionally biased stretch (polar residues) spans 804-814 (TTATSLYSSDP). Low complexity predominate over residues 821–834 (ASSSNAAKSNLPKS). The span at 937-947 (TKKDAQKDQDT) shows a compositional bias: basic and acidic residues. Residues 991-1335 (REAERQLVLR…NEELLWKLQT (345 aa)) are a coiled coil. The span at 1348 to 1369 (SPVYRGSSSGPSSPARVSTTPR) shows a compositional bias: low complexity.

In the C-terminal section; belongs to the MTUS1 family. In terms of assembly, homodimer. Interacts with KIF2C and MAPRE1; the interaction is direct and probably targets MTUS2 and KIF2C to microtubules. In terms of tissue distribution, detected in embryonic stem cells differentiating to cardiomyocytes.

It localises to the cytoplasm. The protein resides in the cytoskeleton. Its function is as follows. Binds microtubules. Together with MAPRE1 may target the microtubule depolymerase KIF2C to the plus-end of microtubules. May regulate the dynamics of microtubules at their growing distal tip. The chain is Microtubule-associated tumor suppressor candidate 2 (MTUS2) from Homo sapiens (Human).